We begin with the raw amino-acid sequence, 138 residues long: Isochorismatase-like protein asqB (138 aa).

It belongs to the isochorismatase family.

The catalysed reaction is [(1'E)-5'-(3',3'-dimethyloxiran-2'-yl)-3'-hydroxy-3'-methylpent-1'-en-1'-yl]-quinolinone B = yaequinolone C. It participates in secondary metabolite biosynthesis. It functions in the pathway alkaloid biosynthesis. Its pathway is mycotoxin biosynthesis. Functionally, isochorismatase-like protein; part of the gene cluster that mediates the biosynthesis of the aspoquinolone mycotoxins. Within the pathway, asqB converts [(1'E)-5'-(3',3'-dimethyloxiran-2'-yl)-3'-hydroxy-3'-methylpent-1'-en-1'-yl]-quinolinone B into yaequinolone C. The first step of the pathway is catalyzed by the nonribosomal peptide synthetase asqK that condenses anthranilic acid and O-methyl-L-tyrosine to produce 4'-methoxycyclopeptin. 4'-methoxycyclopeptin is then converted to 4'-methoxydehydrocyclopeptin by the ketoglutarate-dependent dioxygenase asqJ. AsqJ also converts its first product 4'-methoxydehydrocyclopeptin to 4'-methoxycyclopenin. The following conversion of 4'-methoxycyclopenin into 4'-methoxyviridicatin is catalyzed by the cyclopenase asqI. 4'-methoxyviridicatin is the precursor of quinolone natural products, and is further converted to quinolinone B. The prenyltransferase asqH1 then catalyzes the canonical Friedel-Crafts alkylation of quinolinone B with dimethylallyl cation to yield dimethylallyl quinolone, which is subjected to FAD-dependent dehydrogenation by the FAD-linked oxidoreductase asqF to yield conjugated aryl diene. The delta(3') double bond then serves as the site of the second alkylation with DMAPP catalyzed by the prenyltransferase asqH2 to yield a carbenium ion intermediate, which can be attacked by H(2)O to yield a styrenyl quinolone containing a C3'-hydroxyprenyl chain. The FAD-dependent monooxygenase asqG performs epoxidation of the terminal C7'-C8' olefin. Finally, after dehydratation of the epoxide at C3 by asqC, the quinolone epoxide rearrangement protein asqO catalyzes an enzymatic 3-exo-tet cyclization to yield the cyclopropyl-THF ring system in aspoquinolone. This Emericella nidulans (strain FGSC A4 / ATCC 38163 / CBS 112.46 / NRRL 194 / M139) (Aspergillus nidulans) protein is Isochorismatase-like protein asqB.